Here is a 479-residue protein sequence, read N- to C-terminus: UDP-N-acetylmuramate--L-alanine ligase (479 aa).

Residue 128-134 participates in ATP binding; that stretch reads GAHGKTT.

This sequence belongs to the MurCDEF family.

It is found in the cytoplasm. The enzyme catalyses UDP-N-acetyl-alpha-D-muramate + L-alanine + ATP = UDP-N-acetyl-alpha-D-muramoyl-L-alanine + ADP + phosphate + H(+). The protein operates within cell wall biogenesis; peptidoglycan biosynthesis. In terms of biological role, cell wall formation. The polypeptide is UDP-N-acetylmuramate--L-alanine ligase (Psychrobacter arcticus (strain DSM 17307 / VKM B-2377 / 273-4)).